Reading from the N-terminus, the 100-residue chain is Urease subunit gamma (100 aa).

This sequence belongs to the urease gamma subunit family. Heterotrimer of UreA (gamma), UreB (beta) and UreC (alpha) subunits. Three heterotrimers associate to form the active enzyme.

It is found in the cytoplasm. It carries out the reaction urea + 2 H2O + H(+) = hydrogencarbonate + 2 NH4(+). It participates in nitrogen metabolism; urea degradation; CO(2) and NH(3) from urea (urease route): step 1/1. The polypeptide is Urease subunit gamma (Nitrosococcus oceani (strain ATCC 19707 / BCRC 17464 / JCM 30415 / NCIMB 11848 / C-107)).